The sequence spans 398 residues: uncharacterized protein (398 aa).

The region spanning 21–253 (TNFGPTNLII…WQLTSTSEPE (233 aa)) is the Radical SAM core domain. [4Fe-4S] cluster is bound by residues Cys37, Cys41, and Cys44.

It belongs to the radical SAM superfamily. Anaerobic sulfatase-maturating enzyme family. The cofactor is [4Fe-4S] cluster.

This is an uncharacterized protein from Synechocystis sp. (strain ATCC 27184 / PCC 6803 / Kazusa).